Here is a 168-residue protein sequence, read N- to C-terminus: Co-chaperone protein HscB homolog (168 aa).

Positions 5 to 77 (DYFSLFGLPS…MLRARYLCES (73 aa)) constitute a J domain.

It belongs to the HscB family. As to quaternary structure, interacts with HscA and stimulates its ATPase activity.

In terms of biological role, co-chaperone involved in the maturation of iron-sulfur cluster-containing proteins. Seems to help targeting proteins to be folded toward HscA. The protein is Co-chaperone protein HscB homolog of Bordetella avium (strain 197N).